The primary structure comprises 368 residues: 3-dehydroquinate synthase (368 aa).

NAD(+) is bound by residues 71 to 76 (DGEAFK), 105 to 109 (GVVGD), 129 to 130 (TT), lysine 142, lysine 151, and 169 to 172 (TLRT). Residues glutamate 184, histidine 247, and histidine 264 each contribute to the Zn(2+) site.

This sequence belongs to the sugar phosphate cyclases superfamily. Dehydroquinate synthase family. It depends on Co(2+) as a cofactor. The cofactor is Zn(2+). Requires NAD(+) as cofactor.

It localises to the cytoplasm. The catalysed reaction is 7-phospho-2-dehydro-3-deoxy-D-arabino-heptonate = 3-dehydroquinate + phosphate. It participates in metabolic intermediate biosynthesis; chorismate biosynthesis; chorismate from D-erythrose 4-phosphate and phosphoenolpyruvate: step 2/7. Functionally, catalyzes the conversion of 3-deoxy-D-arabino-heptulosonate 7-phosphate (DAHP) to dehydroquinate (DHQ). The protein is 3-dehydroquinate synthase of Cupriavidus necator (strain ATCC 17699 / DSM 428 / KCTC 22496 / NCIMB 10442 / H16 / Stanier 337) (Ralstonia eutropha).